A 237-amino-acid polypeptide reads, in one-letter code: Ribosomal RNA small subunit methyltransferase G (237 aa).

S-adenosyl-L-methionine is bound by residues Gly78, Phe83, 129–130, and Arg148; that span reads AE. The segment at 216–237 is disordered; the sequence is SKKKETPNKYPRKAGTPNKKPL.

The protein belongs to the methyltransferase superfamily. RNA methyltransferase RsmG family.

The protein localises to the cytoplasm. Functionally, specifically methylates the N7 position of a guanine in 16S rRNA. This Streptococcus agalactiae serotype III (strain NEM316) protein is Ribosomal RNA small subunit methyltransferase G.